Here is a 106-residue protein sequence, read N- to C-terminus: L-rhamnose mutarotase (106 aa).

Substrate is bound at residue tyrosine 20. Catalysis depends on histidine 24, which acts as the Proton donor. Residues tyrosine 43 and 78–79 (WW) contribute to the substrate site.

The protein belongs to the rhamnose mutarotase family. As to quaternary structure, homodimer.

The protein resides in the cytoplasm. It carries out the reaction alpha-L-rhamnose = beta-L-rhamnose. The protein operates within carbohydrate metabolism; L-rhamnose metabolism. In terms of biological role, involved in the anomeric conversion of L-rhamnose. This chain is L-rhamnose mutarotase, found in Leptothrix cholodnii (strain ATCC 51168 / LMG 8142 / SP-6) (Leptothrix discophora (strain SP-6)).